The primary structure comprises 957 residues: Glycine dehydrogenase (decarboxylating) (957 aa).

K708 is subject to N6-(pyridoxal phosphate)lysine.

Belongs to the GcvP family. As to quaternary structure, the glycine cleavage system is composed of four proteins: P, T, L and H. Pyridoxal 5'-phosphate serves as cofactor.

The catalysed reaction is N(6)-[(R)-lipoyl]-L-lysyl-[glycine-cleavage complex H protein] + glycine + H(+) = N(6)-[(R)-S(8)-aminomethyldihydrolipoyl]-L-lysyl-[glycine-cleavage complex H protein] + CO2. In terms of biological role, the glycine cleavage system catalyzes the degradation of glycine. The P protein binds the alpha-amino group of glycine through its pyridoxal phosphate cofactor; CO(2) is released and the remaining methylamine moiety is then transferred to the lipoamide cofactor of the H protein. The chain is Glycine dehydrogenase (decarboxylating) from Salmonella typhi.